The chain runs to 143 residues: Large ribosomal subunit protein bL28c (143 aa).

Residues 1–66 constitute a chloroplast transit peptide; it reads MTTMATQGAW…SFPGIQPIVA (66 aa).

The protein belongs to the bacterial ribosomal protein bL28 family. As to quaternary structure, part of the 50S ribosomal subunit.

It localises to the plastid. It is found in the chloroplast. The chain is Large ribosomal subunit protein bL28c (RPL28) from Arabidopsis thaliana (Mouse-ear cress).